A 352-amino-acid polypeptide reads, in one-letter code: Peptide chain release factor 1 (352 aa).

An N5-methylglutamine modification is found at glutamine 229.

It belongs to the prokaryotic/mitochondrial release factor family. Post-translationally, methylated by PrmC. Methylation increases the termination efficiency of RF1.

It is found in the cytoplasm. Peptide chain release factor 1 directs the termination of translation in response to the peptide chain termination codons UAG and UAA. This Acidiphilium cryptum (strain JF-5) protein is Peptide chain release factor 1.